Here is a 677-residue protein sequence, read N- to C-terminus: UvrABC system protein B (677 aa).

Residues 27 to 192 form the Helicase ATP-binding domain; it reads ANLGQGVRDQ…QRNDFDFHRG (166 aa). 40–47 lines the ATP pocket; the sequence is GVTGSGKT. The Beta-hairpin signature appears at 93–116; that stretch reads YYDYYQPEAYVPASDTYIEKDSSI. A Helicase C-terminal domain is found at 432 to 594; sequence QVDDLLAECR…IEPRTIRKSL (163 aa). The UVR domain maps to 638–673; it reads AKHIQKLEREMREAAKELEFERAATLRDRIRLLRER.

The protein belongs to the UvrB family. In terms of assembly, forms a heterotetramer with UvrA during the search for lesions. Interacts with UvrC in an incision complex.

It is found in the cytoplasm. The UvrABC repair system catalyzes the recognition and processing of DNA lesions. A damage recognition complex composed of 2 UvrA and 2 UvrB subunits scans DNA for abnormalities. Upon binding of the UvrA(2)B(2) complex to a putative damaged site, the DNA wraps around one UvrB monomer. DNA wrap is dependent on ATP binding by UvrB and probably causes local melting of the DNA helix, facilitating insertion of UvrB beta-hairpin between the DNA strands. Then UvrB probes one DNA strand for the presence of a lesion. If a lesion is found the UvrA subunits dissociate and the UvrB-DNA preincision complex is formed. This complex is subsequently bound by UvrC and the second UvrB is released. If no lesion is found, the DNA wraps around the other UvrB subunit that will check the other stand for damage. This Nitratidesulfovibrio vulgaris (strain DP4) (Desulfovibrio vulgaris) protein is UvrABC system protein B.